A 268-amino-acid chain; its full sequence is Interleukin-1 alpha (268 aa).

Residues 1 to 112 constitute a propeptide that is removed on maturation; sequence MAKVPDLFED…NTEEEIIKPR (112 aa). Position 82 is an N6-acetyllysine (K82). A nuclear localization signal (NLS) region spans residues 82 to 86; sequence KKRRL. Residue S87 is modified to Phosphoserine. N-linked (GlcNAc...) asparagine glycans are attached at residues N102 and N141.

This sequence belongs to the IL-1 family. In terms of assembly, monomer. Interacts with TMED10; the interaction mediates the translocation from the cytoplasm into the ERGIC (endoplasmic reticulum-Golgi intermediate compartment) and thereby secretion. Interacts with IL1R1. Interacts with S100A13; this interaction is the first step in the export of IL1A, followed by direct translocation of this complex across the plasma membrane. Post-translationally, acetylated within its nuclear localization sequence, which impacts subcellular localization. In terms of processing, proteolytic processed by CAPN1 in a calcium-dependent manner. Cleavage from 31 kDa precursor to 18 kDa biologically active molecules. Phosphorylated. Phosphorylation greatly enhances susceptibility to digestion and promotes the conversion of pre-IL1A alpha to the biologically active IL1A.

The protein localises to the nucleus. It is found in the cytoplasm. The protein resides in the secreted. In terms of biological role, cytokine constitutively present intracellularly in nearly all resting non-hematopoietic cells that plays an important role in inflammation and bridges the innate and adaptive immune systems. After binding to its receptor IL1R1 together with its accessory protein IL1RAP, forms the high affinity interleukin-1 receptor complex. Signaling involves the recruitment of adapter molecules such as MYD88, IRAK1 or IRAK4. In turn, mediates the activation of NF-kappa-B and the three MAPK pathways p38, p42/p44 and JNK pathways. Within the cell, acts as an alarmin and cell death results in its liberation in the extracellular space after disruption of the cell membrane to induce inflammation and alert the host to injury or damage. In addition to its role as a danger signal, which occurs when the cytokine is passively released by cell necrosis, directly senses DNA damage and acts as signal for genotoxic stress without loss of cell integrity. The protein is Interleukin-1 alpha (IL1A) of Bos taurus (Bovine).